A 178-amino-acid polypeptide reads, in one-letter code: MORN repeat-containing protein 5 (178 aa).

3 MORN repeats span residues 8–30 (YDGD…THTR), 31–53 (YVGE…NGSK), and 54–75 (YEGT…DGLK).

It is found in the cell projection. The protein resides in the cilium. The protein localises to the flagellum. The polypeptide is MORN repeat-containing protein 5 (morn5) (Danio rerio (Zebrafish)).